Reading from the N-terminus, the 331-residue chain is Cathepsin 7 (331 aa).

An N-terminal signal peptide occupies residues 1-17; the sequence is MTPTVFLSILCLGVALA. Positions 18 to 111 are cleaved as a propeptide — activation peptide; it reads APAPDYNLDA…GKHIQKRNPK (94 aa). The short motif at 33 to 50 is the Nuclear localization signal element; that stretch reads KRSNDRTYSPEEEKQRRA. Asparagine 72 carries N-linked (GlcNAc...) asparagine glycosylation. Intrachain disulfides connect cysteine 133–cysteine 176, cysteine 167–cysteine 209, and cysteine 267–cysteine 320. The active site involves cysteine 136. Residues histidine 274 and asparagine 298 contribute to the active site.

Belongs to the peptidase C1 family. As to expression, expressed in placenta. Expressed in parietal and spiral artery-associated trophoblast giant cells, most abundantly during the phase of trophoblast invasion. From 14.5 dpc onwards, expressed at lower levels in labyrinth trophoblast cells. Expressed in trophoblast stem cells. Expressed in heart, liver and testis.

The protein localises to the endosome. It localises to the lysosome. It is found in the cytoplasm. The protein resides in the perinuclear region. Its subcellular location is the golgi apparatus. The protein localises to the nucleus. It localises to the secreted. It is found in the extracellular space. In terms of biological role, involved in trophoblast cell proliferation and differentiation probably by affecting mitotic cell cycle progression. Proteolytic activity and nuclear localization are essential for its role in cell cycle progression. The sequence is that of Cathepsin 7 from Mus musculus (Mouse).